Here is a 102-residue protein sequence, read N- to C-terminus: UPF0045 protein Mb1933 (102 aa).

The protein belongs to the UPF0045 family.

The chain is UPF0045 protein Mb1933 from Mycobacterium bovis (strain ATCC BAA-935 / AF2122/97).